A 33-amino-acid chain; its full sequence is Pheromone biosynthesis-activating neuropeptide (33 aa).

The interval 1–33 (LADDMPATMADQEVYRPEPEQIDSRNKYFSPRL) is disordered. Residues 13 to 26 (EVYRPEPEQIDSRN) are compositionally biased toward basic and acidic residues. The residue at position 33 (leucine 33) is a Leucine amide.

The protein belongs to the pyrokinin family.

Its subcellular location is the secreted. Functionally, involved in the control of pheromone production in females. The protein is Pheromone biosynthesis-activating neuropeptide of Lymantria dispar (Gypsy moth).